The primary structure comprises 39 residues: Cytochrome b559 subunit beta (39 aa).

The helical transmembrane segment at Trp14–Ser30 threads the bilayer. His18 provides a ligand contact to heme.

This sequence belongs to the PsbE/PsbF family. As to quaternary structure, heterodimer of an alpha subunit and a beta subunit. PSII is composed of 1 copy each of membrane proteins PsbA, PsbB, PsbC, PsbD, PsbE, PsbF, PsbH, PsbI, PsbJ, PsbK, PsbL, PsbM, PsbT, PsbX, PsbY, PsbZ, Psb30/Ycf12, at least 3 peripheral proteins of the oxygen-evolving complex and a large number of cofactors. It forms dimeric complexes. It depends on heme b as a cofactor.

Its subcellular location is the plastid. It is found in the chloroplast thylakoid membrane. Functionally, this b-type cytochrome is tightly associated with the reaction center of photosystem II (PSII). PSII is a light-driven water:plastoquinone oxidoreductase that uses light energy to abstract electrons from H(2)O, generating O(2) and a proton gradient subsequently used for ATP formation. It consists of a core antenna complex that captures photons, and an electron transfer chain that converts photonic excitation into a charge separation. The protein is Cytochrome b559 subunit beta of Cucumis sativus (Cucumber).